We begin with the raw amino-acid sequence, 1085 residues long: Ankyrin repeat and IBR domain-containing protein 1 (1085 aa).

Glycine 2 is lipidated: N-myristoyl glycine. 2 ANK repeats span residues 45 to 75 (QHNTPLHYAARHGMNRILGTFLFGRDGNPNK) and 145 to 174 (KKNTPLHYAAASGMKACVELLVKHGGDLFA). The interval 282–322 (CQRSGVQMPTPPPSGYNAWDTLPSPRTPRTTRSSVTSPDEI) is disordered. Residues 304–319 (PSPRTPRTTRSSVTSP) are compositionally biased toward low complexity. Residues 330–570 (DTSLCDICMC…GGYYRCTRYE (241 aa)) are TRIAD supradomain. Positions 334, 337, 352, 354, 357, 360, 379, 384, 466, 469, 474, 479, 520, and 523 each coordinate Zn(2+). Residues 334–384 (CDICMCSISVFEDPVDMPCGHDFCRGCWEAFLNLKIQEGEAHNIFCPAYEC) form an RING-type 1 zinc finger. The IBR-type zinc-finger motif lies at 402–479 (DKRYLQFDIK…LGEAHEPCDC (78 aa)). The RING-type 2; atypical zinc finger occupies 520–549 (CANCKSPIQKNEGCNHMQCAKCKYDFCWIC). Residue cysteine 533 is part of the active site. The Zn(2+) site is built by cysteine 538, cysteine 541, cysteine 546, cysteine 549, histidine 556, and cysteine 566. A coiled-coil region spans residues 576–641 (EEQSKEMTVE…RALKETEGGC (66 aa)). Serine 738 carries the phosphoserine modification. The segment at 764 to 808 (RRRHRQQRRRGDVHSLLSNPTDLDEPSESTFDLPEGSSGRRPGAS) is disordered. The UIM domain maps to 846–865 (EDDPNILLAIQLSLQESGLD). Phosphoserine is present on residues serine 879 and serine 906. 3 disordered regions span residues 884–907 (GSSLPSRLDSVPRSTESPRAALSS), 921–959 (GADSDPFSTDTLSSRPLSETRSDFCPSSSDLDSAGQDPS), and 1014–1085 (PPED…VHSV). Polar residues predominate over residues 926 to 959 (PFSTDTLSSRPLSETRSDFCPSSSDLDSAGQDPS). Residues 1018–1033 (SVSKDTGVHEGERAQM) show a composition bias toward basic and acidic residues. A compositionally biased stretch (polar residues) spans 1068–1085 (ASQTPQTSSDWLEQVHSV).

The protein belongs to the RBR family.

It catalyses the reaction [E2 ubiquitin-conjugating enzyme]-S-ubiquitinyl-L-cysteine + [acceptor protein]-L-lysine = [E2 ubiquitin-conjugating enzyme]-L-cysteine + [acceptor protein]-N(6)-ubiquitinyl-L-lysine.. Might act as an E3 ubiquitin-protein ligase, or as part of E3 complex, which accepts ubiquitin from specific E2 ubiquitin-conjugating enzymes and then transfers it to substrates. The chain is Ankyrin repeat and IBR domain-containing protein 1 (Ankib1) from Mus musculus (Mouse).